The primary structure comprises 627 residues: 1-deoxy-D-xylulose-5-phosphate synthase (627 aa).

Residues His87 and 128-130 contribute to the thiamine diphosphate site; that span reads GHS. Asp159 contacts Mg(2+). Residues 160–161, Asn188, Phe295, and Glu375 each bind thiamine diphosphate; that span reads GA. Asn188 provides a ligand contact to Mg(2+).

Belongs to the transketolase family. DXPS subfamily. In terms of assembly, homodimer. Mg(2+) serves as cofactor. The cofactor is thiamine diphosphate.

It carries out the reaction D-glyceraldehyde 3-phosphate + pyruvate + H(+) = 1-deoxy-D-xylulose 5-phosphate + CO2. It participates in metabolic intermediate biosynthesis; 1-deoxy-D-xylulose 5-phosphate biosynthesis; 1-deoxy-D-xylulose 5-phosphate from D-glyceraldehyde 3-phosphate and pyruvate: step 1/1. Catalyzes the acyloin condensation reaction between C atoms 2 and 3 of pyruvate and glyceraldehyde 3-phosphate to yield 1-deoxy-D-xylulose-5-phosphate (DXP). The protein is 1-deoxy-D-xylulose-5-phosphate synthase of Pseudomonas paraeruginosa (strain DSM 24068 / PA7) (Pseudomonas aeruginosa (strain PA7)).